A 452-amino-acid chain; its full sequence is D-inositol 3-phosphate glycosyltransferase (452 aa).

A 1D-myo-inositol 3-phosphate-binding site is contributed by H25. Residues 31–32 (QP) and G39 each bind UDP-N-acetyl-alpha-D-glucosamine. Residues 36–41 (DAGGMN), K94, Y127, T151, and R171 each bind 1D-myo-inositol 3-phosphate. R245, K250, and Q309 together coordinate UDP-N-acetyl-alpha-D-glucosamine. The Mg(2+) site is built by Y318, R319, and S321. UDP-N-acetyl-alpha-D-glucosamine-binding residues include E331 and E339. T345 provides a ligand contact to Mg(2+).

Belongs to the glycosyltransferase group 1 family. MshA subfamily. As to quaternary structure, homodimer.

The enzyme catalyses 1D-myo-inositol 3-phosphate + UDP-N-acetyl-alpha-D-glucosamine = 1D-myo-inositol 2-acetamido-2-deoxy-alpha-D-glucopyranoside 3-phosphate + UDP + H(+). In terms of biological role, catalyzes the transfer of a N-acetyl-glucosamine moiety to 1D-myo-inositol 3-phosphate to produce 1D-myo-inositol 2-acetamido-2-deoxy-glucopyranoside 3-phosphate in the mycothiol biosynthesis pathway. The chain is D-inositol 3-phosphate glycosyltransferase from Rhodococcus jostii (strain RHA1).